Reading from the N-terminus, the 185-residue chain is Elongation factor P (185 aa).

Belongs to the elongation factor P family.

It is found in the cytoplasm. It functions in the pathway protein biosynthesis; polypeptide chain elongation. Its function is as follows. Involved in peptide bond synthesis. Stimulates efficient translation and peptide-bond synthesis on native or reconstituted 70S ribosomes in vitro. Probably functions indirectly by altering the affinity of the ribosome for aminoacyl-tRNA, thus increasing their reactivity as acceptors for peptidyl transferase. This is Elongation factor P from Trichodesmium erythraeum (strain IMS101).